Reading from the N-terminus, the 79-residue chain is Protein VdcD (79 aa).

In terms of biological role, involved in the non-oxidative decarboxylation and detoxification of phenolic derivatives under both aerobic and anaerobic conditions, however the precise biochemical function of VdcD in metabolism of phenolic acid is unknown. In Streptomyces sp. (strain D7), this protein is Protein VdcD.